The following is a 152-amino-acid chain: Ribosome maturation factor RimP (152 aa).

This sequence belongs to the RimP family.

It localises to the cytoplasm. Functionally, required for maturation of 30S ribosomal subunits. The protein is Ribosome maturation factor RimP of Paraburkholderia xenovorans (strain LB400).